Reading from the N-terminus, the 92-residue chain is Defensin Lucifensin (92 aa).

The first 23 residues, 1–23 (MKFFMVFAVTFCLALSFVSQSLA), serve as a signal peptide directing secretion. The propeptide occupies 24–52 (LPADDEAHFVDGLEALKTIEPELHGRYKR). Intrachain disulfides connect Cys55–Cys82, Cys68–Cys88, and Cys72–Cys90.

Belongs to the invertebrate defensin family. Type 1 subfamily. The disulfide bonds are essential for antimicrobial activity. In terms of tissue distribution, larval fat body, hemolymph and salivary glands (at protein level). Expressed in the salivary glands of all larval stages.

The protein resides in the secreted. It is found in the host cell membrane. Shows strong antibacterial activity against numerous Gram-positive bacteria. It selectively inhibits peptidoglycan biosynthesis through complex formation with the cell wall precursor lipid II (1:1 molar ratio) thus inhibiting cell wall synthesis. Shows antibacterial activity against the Gram-positive bacteria M.luteus, E.fecalis (MIC=32 mg/L), S.aureus (MIC=16 mg/L), S.carnosus (MIC=2 mg/L), S.pneumoniae (MIC=2 mg/L) and S.pyogenes (MIC=2 mg/L) and against a number of methicillin-resistant S.aureus and glycopeptide-intermediate S.aureus isolates. Does not show antibacterial activity against Gram-negative bacteria or antifungal activity against C.utilis. Shows slight antifungal activity against C.albicans. The polypeptide is Defensin Lucifensin (Lucilia sericata (Green bottle fly)).